Reading from the N-terminus, the 227-residue chain is Terpene cyclase ltmB (227 aa).

Helical transmembrane passes span 20-40, 51-71, 76-96, 113-133, 135-155, 173-195, and 206-226; these read LAET…VLMI, MALI…IIYP, VELA…TSAA, AGLI…ALAM, IGPA…LSIG, LWSS…WRYW, and LILW…VCLL.

The protein belongs to the paxB family.

The protein localises to the membrane. It participates in secondary metabolite biosynthesis. Terpene cyclase; part of the gene cluster that mediates the biosynthesis of lolitrems, indole-diterpene mycotoxins that are potent tremorgens in mammals, and are synthesized by clavicipitaceous fungal endophytes in association with their grass hosts. The geranylgeranyl diphosphate (GGPP) synthase ltmG is proposed to catalyze the first step in lolitrem biosynthesis. LtmG catalyzes a series of iterative condensations of isopentenyl diphosphate (IPP) with dimethylallyl diphosphate (DMAPP), geranyl diphosphate (GPP), and farnesyl diphosphate (FPP), to form GGPP. GGPP then condenses with indole-3-glycerol phosphate to form 3-geranylgeranylindole, an acyclic intermediate, to be incorporated into paxilline. Either ltmG or ltmC could be responsible for this step, as both are putative prenyl transferases. The FAD-dependent monooxygenase ltmM then catalyzes the epoxidation of the two terminal alkenes of the geranylgeranyl moiety, which is subsequently cyclized by ltmB, to paspaline. The cytochrome P450 monooxygenases ltmQ and ltmP can sequentially oxidize paspaline to terpendole E and terpendole F. Alternatively, ltmP converts paspaline to an intermediate which is oxidized by ltmQ to terpendole F. LtmF, ltmK, ltmE and ltmJ appear to be unique to the epichloe endophytes. The prenyltransferase ltmF is involved in the 27-hydroxyl-O-prenylation. The cytochrome P450 monooxygenase ltmK is required for the oxidative acetal ring formation. The multi-functional prenyltransferase ltmE is required for C20- and C21-prenylations of the indole ring of paspalanes and acts together with the cytochrome P450 monooxygenase ltmJ to yield lolitremanes by multiple oxidations and ring closures. The stereoisomer pairs of lolitriol and lolitrem N or lolitrem B and lolitrem F may be attributed to variations in the way in which ring closure can occur under the action of ltmJ. While the major product of this pathway is lolitrem B, the prenyl transferases and cytochrome P450 monooxygenases identified in this pathway have a remarkable versatility in their regio- and stereo-specificities to generate a diverse range of metabolites that are products of a metabolic grid rather than a linear pathway. The protein is Terpene cyclase ltmB of Epichloe festucae var. lolii (Neotyphodium lolii).